The following is a 398-amino-acid chain: F-box/kelch-repeat protein At1g30090 (398 aa).

Residues 51–98 (EPLIPGLPDDVALNCLLRVPVQSHVSSKSVCKRWHLLFGTKETFFAKR) enclose the F-box domain. 5 Kelch repeats span residues 106-152 (PWLF…FRSV), 159-207 (TMFV…VIDG), 209-255 (IYAA…VLNG), 257-304 (LLVT…IYDR), and 305-346 (LFIV…AVNC).

The protein is F-box/kelch-repeat protein At1g30090 of Arabidopsis thaliana (Mouse-ear cress).